A 770-amino-acid polypeptide reads, in one-letter code: DNA replication licensing factor MCM3 (770 aa).

The 207-residue stretch at 290 to 496 (TFDLLGNSLA…EIDRQISEHV (207 aa)) folds into the MCM domain. 340–347 (GDPSVAKS) contributes to the ATP binding site. An Arginine finger motif is present at residues 472-475 (SRFD). Residues 653-670 (EEREQREMEMKQQADHDA) show a composition bias toward basic and acidic residues. A disordered region spans residues 653–698 (EEREQREMEMKQQADHDAGASGGNADEHRSSGNDPMDVDVGNASND).

Belongs to the MCM family. As to quaternary structure, component of the minichromosome maintenance (MCM) complex, a heterotetramer composed of MCM2, MCM3, MCM4, MCM5, MCM6 and MCM7.

It localises to the nucleus. The enzyme catalyses ATP + H2O = ADP + phosphate + H(+). In terms of biological role, probable component of the MCM2-7 complex (MCM complex) that may function as a DNA helicase and which is essential to undergo a single round of replication initiation and elongation per cell cycle in eukaryotic cells. This Oryza sativa subsp. indica (Rice) protein is DNA replication licensing factor MCM3 (MCM3).